The sequence spans 402 residues: Imidazolonepropionase (402 aa).

The Fe(3+) site is built by H66 and H68. Zn(2+)-binding residues include H66 and H68. 3 residues coordinate 4-imidazolone-5-propanoate: R75, Y138, and H171. Position 138 (Y138) interacts with N-formimidoyl-L-glutamate. H236 is a Fe(3+) binding site. H236 is a Zn(2+) binding site. Residue Q239 participates in 4-imidazolone-5-propanoate binding. D311 is a Fe(3+) binding site. D311 lines the Zn(2+) pocket. The N-formimidoyl-L-glutamate site is built by N313 and G315. Residue T316 participates in 4-imidazolone-5-propanoate binding.

The protein belongs to the metallo-dependent hydrolases superfamily. HutI family. The cofactor is Zn(2+). Fe(3+) is required as a cofactor.

Its subcellular location is the cytoplasm. It catalyses the reaction 4-imidazolone-5-propanoate + H2O = N-formimidoyl-L-glutamate. It participates in amino-acid degradation; L-histidine degradation into L-glutamate; N-formimidoyl-L-glutamate from L-histidine: step 3/3. Functionally, catalyzes the hydrolytic cleavage of the carbon-nitrogen bond in imidazolone-5-propanoate to yield N-formimidoyl-L-glutamate. It is the third step in the universal histidine degradation pathway. The protein is Imidazolonepropionase of Pseudomonas aeruginosa (strain UCBPP-PA14).